The chain runs to 263 residues: Endonuclease 8 (263 aa).

The active-site Schiff-base intermediate with DNA is the Pro2. Catalysis depends on Glu3, which acts as the Proton donor. Catalysis depends on Lys53, which acts as the Proton donor; for beta-elimination activity. DNA-binding residues include Gln70, Arg125, and Asn169. Residues 229 to 263 (KVFHRDGEPCERCGSIIEKTTLSSRPFYWCPGCQH) form an FPG-type zinc finger. Arg253 serves as the catalytic Proton donor; for delta-elimination activity.

Belongs to the FPG family. Zn(2+) is required as a cofactor.

It carries out the reaction 2'-deoxyribonucleotide-(2'-deoxyribose 5'-phosphate)-2'-deoxyribonucleotide-DNA = a 3'-end 2'-deoxyribonucleotide-(2,3-dehydro-2,3-deoxyribose 5'-phosphate)-DNA + a 5'-end 5'-phospho-2'-deoxyribonucleoside-DNA + H(+). Involved in base excision repair of DNA damaged by oxidation or by mutagenic agents. Acts as a DNA glycosylase that recognizes and removes damaged bases. Has a preference for oxidized pyrimidines, such as thymine glycol, 5,6-dihydrouracil and 5,6-dihydrothymine. Has AP (apurinic/apyrimidinic) lyase activity and introduces nicks in the DNA strand. Cleaves the DNA backbone by beta-delta elimination to generate a single-strand break at the site of the removed base with both 3'- and 5'-phosphates. The sequence is that of Endonuclease 8 from Shigella sonnei (strain Ss046).